The chain runs to 447 residues: Alpha-1,3-mannosyl-glycoprotein 2-beta-N-acetylglucosaminyltransferase (447 aa).

At 1-6 (MLKKQS) the chain is on the cytoplasmic side. The helical; Signal-anchor for type II membrane protein transmembrane segment at 7–29 (AGLVLWGAILFVAWNALLLLFFW) threads the bilayer. The Lumenal portion of the chain corresponds to 30–447 (TRPVPSRLPS…TWDGYDPSWT (418 aa)). Residues Cys115 and Cys145 are joined by a disulfide bond. 4 residues coordinate substrate: Arg117, Asp144, His190, and Asp212. Asp213 provides a ligand contact to Mn(2+). Cys239 and Cys305 form a disulfide bridge. Asp291 serves as the catalytic Proton acceptor. Ser322 provides a ligand contact to substrate.

Belongs to the glycosyltransferase 13 family. As to quaternary structure, interacts with MGAT4D. Interacts with BRI3. Requires Mn(2+) as cofactor.

Its subcellular location is the golgi apparatus membrane. The protein localises to the cytoplasm. It is found in the perinuclear region. It catalyses the reaction N(4)-(alpha-D-Man-(1-&gt;3)-[alpha-D-Man-(1-&gt;3)-[alpha-D-Man-(1-&gt;6)]-alpha-D-Man-(1-&gt;6)]-beta-D-Man-(1-&gt;4)-beta-D-GlcNAc-(1-&gt;4)-beta-D-GlcNAc)-L-asparaginyl-[protein] (N-glucan mannose isomer 5A1,2) + UDP-N-acetyl-alpha-D-glucosamine = N(4)-{beta-D-GlcNAc-(1-&gt;2)-alpha-D-Man-(1-&gt;3)-[alpha-D-Man-(1-&gt;3)-[alpha-D-Man-(1-&gt;6)]-alpha-D-Man-(1-&gt;6)]-beta-D-Man-(1-&gt;4)-beta-D-GlcNAc-(1-&gt;4)-beta-D-GlcNAc}-L-asparaginyl-[protein] + UDP + H(+). It functions in the pathway protein modification; protein glycosylation. Initiates complex N-linked carbohydrate formation. Essential for the conversion of high-mannose to hybrid and complex N-glycans. In Oryctolagus cuniculus (Rabbit), this protein is Alpha-1,3-mannosyl-glycoprotein 2-beta-N-acetylglucosaminyltransferase (MGAT1).